The chain runs to 170 residues: Gas vesicle protein A2 (170 aa).

The tract at residues 86–170 (SPMAKTVGRA…PRRRTEEEDR (85 aa)) is disordered. 2 stretches are compositionally biased toward basic and acidic residues: residues 104–119 (LTDK…HEHE) and 127–137 (DRPRAGAERGR). Over residues 138–148 (STQRPRSRPAA) the composition is skewed to basic residues. The span at 149-170 (RPRDEDDRPRSRPRRRTEEEDR) shows a compositional bias: basic and acidic residues.

The protein belongs to the gas vesicle GvpA family. In terms of assembly, the gas vesicle shell is 2 nm thick and consists of a single layer of this protein. It forms helical ribs nearly perpendicular to the long axis of the vesicle.

The protein localises to the gas vesicle shell. Gas vesicles are hollow, gas filled proteinaceous nanostructures found in some microorganisms. During planktonic growth they allow positioning of the organism at a favorable depth for light or nutrient acquisition. GvpA forms the protein shell. It is not clear what function GVs perform in soil bacteria. The chain is Gas vesicle protein A2 from Streptomyces coelicolor (strain ATCC BAA-471 / A3(2) / M145).